A 270-amino-acid chain; its full sequence is Bacterial microcompartment shell protein PduB (270 aa).

The tract at residues 6–18 (LVEQIMAQVIARV) is probable helix that binds cargo to the BMC shell. BMC circularly permuted domains are found at residues 47-152 (EFVG…DRTF) and 154-258 (DVYG…LATL).

This sequence belongs to the EutL/PduB family. In terms of assembly, homotrimerizes to form a pseudohexamer with a central pore. The trimers pack into an array. In terms of processing, in purified BMCs seen as a 28.0 kDa and 25.0 kDa form, both of which have been N-terminally sequenced and whose N-fMet is removed; the smaller form is called PduB'.

It localises to the bacterial microcompartment. It participates in polyol metabolism; 1,2-propanediol degradation. Functionally, the two proteins produced are among the major shell proteins of the bacterial microcompartment (BMC) dedicated to 1,2-propanediol (1,2-PD) degradation. Required for structural integrity of BMCs and to mitigate propionaldehyde toxicity. The N-terminal 13 residues are important for correct assembly of the BMC shell. The isolated BMC shell component protein ratio for J:A:B':B:K:T:U is approximately 15:10:7:6:1:1:2. The N-terminus of the long form (PduB) is required for correct formation of BMCs, deletions in the first 37 residues have substantially reduced levels of the major lumen enzymes. May play a major role in binding the enzyme contents to the shell. Its function is as follows. The 1,2-PD-specific bacterial microcompartment (BMC) concentrates low levels of 1,2-PD catabolic enzymes, concentrates volatile reaction intermediates thus enhancing pathway flux and keeps the level of toxic, mutagenic propionaldehyde low. This chain is Bacterial microcompartment shell protein PduB, found in Salmonella typhimurium (strain LT2 / SGSC1412 / ATCC 700720).